The primary structure comprises 433 residues: 3-phosphoshikimate 1-carboxyvinyltransferase (433 aa).

Residues lysine 21, serine 22, and arginine 26 each coordinate 3-phosphoshikimate. Lysine 21 contacts phosphoenolpyruvate. Residues glycine 92 and arginine 120 each coordinate phosphoenolpyruvate. The 3-phosphoshikimate site is built by serine 166, glutamine 168, aspartate 317, and lysine 344. Glutamine 168 is a phosphoenolpyruvate binding site. Aspartate 317 functions as the Proton acceptor in the catalytic mechanism. Residues arginine 348 and arginine 391 each coordinate phosphoenolpyruvate.

Belongs to the EPSP synthase family. In terms of assembly, monomer.

The protein localises to the cytoplasm. The catalysed reaction is 3-phosphoshikimate + phosphoenolpyruvate = 5-O-(1-carboxyvinyl)-3-phosphoshikimate + phosphate. It participates in metabolic intermediate biosynthesis; chorismate biosynthesis; chorismate from D-erythrose 4-phosphate and phosphoenolpyruvate: step 6/7. In terms of biological role, catalyzes the transfer of the enolpyruvyl moiety of phosphoenolpyruvate (PEP) to the 5-hydroxyl of shikimate-3-phosphate (S3P) to produce enolpyruvyl shikimate-3-phosphate and inorganic phosphate. The protein is 3-phosphoshikimate 1-carboxyvinyltransferase of Caldicellulosiruptor saccharolyticus (strain ATCC 43494 / DSM 8903 / Tp8T 6331).